Here is a 933-residue protein sequence, read N- to C-terminus: Progesterone receptor (933 aa).

A disordered region spans residues Met1–Val48. Residues Met1–Leu164 are AF3; mediates transcriptional activation. The segment at Met1–Ile566 is modulating, Pro-Rich. At Ser20 the chain carries Phosphoserine. The LXXL motif 1 signature appears at Leu55–Leu59. The disordered stretch occupies residues Gly66–Ala255. Ser81 bears the Phosphoserine mark. The LXXL motif 2 motif lies at Leu115–Leu119. Residues Ser130 and Ser162 each carry the phosphoserine modification. Positions Met165–His305 are mediates transcriptional transrepression. A Nuclear localization signal motif is present at residues Lys183–Arg187. A phosphoserine mark is found at Ser190 and Ser213. Residue Ser294 is modified to Phosphoserine; by MAPK1. The tract at residues Gly331–Gly378 is disordered. Residues Ala335–Ser350 are compositionally biased toward low complexity. Ser345 is subject to Phosphoserine; by MAPK. Lys388 is covalently cross-linked (Glycyl lysine isopeptide (Lys-Gly) (interchain with G-Cter in SUMO); alternate). A Glycyl lysine isopeptide (Lys-Gly) (interchain with G-Cter in ubiquitin); alternate cross-link involves residue Lys388. Position 400 is a phosphoserine; by CDK2 (Ser400). Residues Pro415–Pro454 form a disordered region. The span at Pro418–Arg433 shows a compositional bias: pro residues. A compositionally biased stretch (low complexity) spans Ala437–Pro454. The segment at Ser456–Arg546 is AF1; mediates transcriptional activation. Lys531 participates in a covalent cross-link: Glycyl lysine isopeptide (Lys-Gly) (interchain with G-Cter in SUMO). NR C4-type zinc fingers lie at residues Cys567–Cys587 and Cys603–Cys627. The nuclear receptor DNA-binding region spans Cys567–Phe639. Position 676 is a phosphoserine (Ser676). An NR LBD domain is found at Gln679–Ile913. Residues Leu687–Lys933 are AF2; mediates transcriptional activation.

Belongs to the nuclear hormone receptor family. As to quaternary structure, interacts with SMARD1 and UNC45A. Interacts with CUEDC2; the interaction promotes ubiquitination, decreases sumoylation, and represses transcriptional activity. Interacts with PIAS3; the interaction promotes sumoylation of PR in a hormone-dependent manner, inhibits DNA-binding, and alters nuclear export. Interacts with SP1; the interaction requires ligand-induced phosphorylation on Ser-345 by ERK1/2-MAPK. Interacts with PRMT2. Interacts with NCOA2 and NCOA1. Interacts with KLF9. Interacts with GTF2B. Phosphorylated on multiple serine sites. Several of these sites are hormone-dependent. Phosphorylation on Ser-294 is highly hormone-dependent and modulates ubiquitination and sumoylation on Lys-388. Phosphorylation on Ser-345 also requires induction by hormone. Basal phosphorylation on Ser-81, Ser-162, Ser-190 and Ser-400 is increased in response to progesterone and can be phosphorylated in vitro by the CDK2-A1 complex. Increased levels of phosphorylation on Ser-400 also in the presence of EGF, heregulin, IGF, PMA and FBS. Phosphorylation at this site by CDK2 is ligand-independent, and increases nuclear translocation and transcriptional activity. Phosphorylation at Ser-162 and Ser-294, but not at Ser-190, is impaired during the G(2)/M phase of the cell cycle. Phosphorylation on Ser-345 by ERK1/2 MAPK is required for interaction with SP1. In terms of processing, sumoylation is hormone-dependent and represses transcriptional activity. Sumoylation on all three sites is enhanced by PIAS3. Desumoylated by SENP1. Sumoylation on Lys-388, the main site of sumoylation, is repressed by ubiquitination on the same site, and modulated by phosphorylation at Ser-294. Post-translationally, ubiquitination is hormone-dependent and represses sumoylation on the same site. Promoted by MAPK-mediated phosphorylation on Ser-294. Palmitoylated by ZDHHC7 and ZDHHC21. Palmitoylation is required for plasma membrane targeting and for rapid intracellular signaling via ERK and AKT kinases and cAMP generation.

It localises to the nucleus. Its subcellular location is the cytoplasm. In terms of biological role, the steroid hormones and their receptors are involved in the regulation of eukaryotic gene expression and affect cellular proliferation and differentiation in target tissues. Transcriptional activator of several progesteron-dependent promoters in a variety of cell types. Involved in activation of SRC-dependent MAPK signaling on hormone stimulation. This chain is Progesterone receptor (PGR), found in Trachypithecus obscurus (Dusky leaf-monkey).